Here is a 535-residue protein sequence, read N- to C-terminus: Succinate-semialdehyde dehydrogenase, mitochondrial (535 aa).

A mitochondrion-targeting transit peptide spans 1–47; that stretch reads MATCIWLRSCGARRLGWTFPGCRLRPRAGGLVPASGPAPGPAQLRCY. At Lys-126 the chain carries N6-acetyllysine; alternate. The residue at position 126 (Lys-126) is an N6-succinyllysine; alternate. 2 positions are modified to N6-succinyllysine: Lys-135 and Lys-184. Residues Arg-213 and 228-231 each bind NAD(+); that span reads KPAE. Arg-213 contributes to the substrate binding site. N6-acetyllysine; alternate is present on Lys-265. Lys-265 carries the post-translational modification N6-succinyllysine; alternate. An NAD(+)-binding site is contributed by 284–289; it reads GSTTTG. Glu-306 acts as the Proton acceptor in catalysis. Arg-334 contributes to the substrate binding site. The Nucleophile role is filled by Cys-340. A disulfide bond links Cys-340 and Cys-342. Lys-365 is subject to N6-acetyllysine. Lys-402 is modified (N6-succinyllysine). Lys-411 carries the N6-acetyllysine modification. Ser-498 lines the substrate pocket. Residue Ser-499 is modified to Phosphoserine.

It belongs to the aldehyde dehydrogenase family. As to quaternary structure, homotetramer.

Its subcellular location is the mitochondrion. It carries out the reaction succinate semialdehyde + NAD(+) + H2O = succinate + NADH + 2 H(+). It participates in amino-acid degradation; 4-aminobutanoate degradation. With respect to regulation, redox-regulated. Inhibited under oxydizing conditions. Catalyzes one step in the degradation of the inhibitory neurotransmitter gamma-aminobutyric acid (GABA). In Pan paniscus (Pygmy chimpanzee), this protein is Succinate-semialdehyde dehydrogenase, mitochondrial (ALDH5A1).